The primary structure comprises 439 residues: Arginine biosynthesis bifunctional protein ArgJ, mitochondrial (439 aa).

Positions 175, 201, 212, 301, 434, and 439 each coordinate substrate. Catalysis depends on T212, which acts as the Nucleophile.

Belongs to the ArgJ family. As to quaternary structure, heterodimer of an alpha and a beta chain. The alpha and beta chains are autoproteolytically processed from a single precursor protein within the mitochondrion.

The protein resides in the mitochondrion matrix. The enzyme catalyses N(2)-acetyl-L-ornithine + L-glutamate = N-acetyl-L-glutamate + L-ornithine. It catalyses the reaction L-glutamate + acetyl-CoA = N-acetyl-L-glutamate + CoA + H(+). The protein operates within amino-acid biosynthesis; L-arginine biosynthesis; L-ornithine and N-acetyl-L-glutamate from L-glutamate and N(2)-acetyl-L-ornithine (cyclic): step 1/1. It participates in amino-acid biosynthesis; L-arginine biosynthesis; N(2)-acetyl-L-ornithine from L-glutamate: step 1/4. Functionally, catalyzes two activities which are involved in the cyclic version of arginine biosynthesis: the synthesis of acetylglutamate from glutamate and acetyl-CoA, and of ornithine by transacetylation between acetylornithine and glutamate. This is Arginine biosynthesis bifunctional protein ArgJ, mitochondrial (ECM42) from Candida albicans (strain SC5314 / ATCC MYA-2876) (Yeast).